The primary structure comprises 243 residues: MSKINDKLTEINTVEYEVASKHSQYLFYSRFGLLDTAAYFLFLLSFFVTAVMFLVGIFHTEQFTLNDQNQGISGFYLFWNVKKPADIFNANFVYSISSFGIAILALGLFSLFLMIFLGYRWAISLFIKSQITKWERVIFSTGFYFSVVAYCFWIALMLLFLVLSDQHFFPRTTTQLKSNPNLSLFFRISHKDNVFSSRLNQLGAFATALCITLVVYELPFLGLFAFNWNKQRAKAIFCRKRKQ.

Helical transmembrane passes span 38 to 58 (AYFLFLLSFFVTAVMFLVGIF), 99 to 119 (FGIAILALGLFSLFLMIFLGY), 143 to 163 (FYFSVVAYCFWIALMLLFLVL), and 204 to 224 (AFATALCITLVVYELPFLGLF).

The protein localises to the cell membrane. This is an uncharacterized protein from Mycoplasma pneumoniae (strain ATCC 29342 / M129 / Subtype 1) (Mycoplasmoides pneumoniae).